The chain runs to 220 residues: FMN-dependent NADH:quinone oxidoreductase (220 aa).

Residues S10, S17–S19, and S136–G139 contribute to the FMN site. A disordered region spans residues H200–R220.

This sequence belongs to the azoreductase type 1 family. As to quaternary structure, homodimer. FMN is required as a cofactor.

It carries out the reaction 2 a quinone + NADH + H(+) = 2 a 1,4-benzosemiquinone + NAD(+). It catalyses the reaction N,N-dimethyl-1,4-phenylenediamine + anthranilate + 2 NAD(+) = 2-(4-dimethylaminophenyl)diazenylbenzoate + 2 NADH + 2 H(+). Functionally, quinone reductase that provides resistance to thiol-specific stress caused by electrophilic quinones. In terms of biological role, also exhibits azoreductase activity. Catalyzes the reductive cleavage of the azo bond in aromatic azo compounds to the corresponding amines. The sequence is that of FMN-dependent NADH:quinone oxidoreductase from Streptomyces coelicolor (strain ATCC BAA-471 / A3(2) / M145).